The chain runs to 325 residues: Flavin-dependent thymidylate synthase (325 aa).

In terms of domain architecture, ThyX spans 12 to 267; that stretch reads ISVRLLEYTG…PRLFRWAGPS (256 aa). FAD contacts are provided by residues serine 65, 89 to 91, and glutamine 97; that span reads RHR. Residues 86–89 and 97–101 each bind dUMP; these read QLVR and QLSHR. A ThyX motif motif is present at residues 89 to 99; it reads RHRVASYTQLS. The insert stretch occupies residues 110-159; sequence AALKACESIGLDCPSKPAETEGGRKAAYRLYSQALERAARDFGASERFAI. Arginine 205 provides a ligand contact to dUMP. Position 221–223 (221–223) interacts with FAD; that stretch reads NAR. Arginine 233 is a binding site for dUMP. The Involved in ionization of N3 of dUMP, leading to its activation role is filled by arginine 233.

This sequence belongs to the thymidylate synthase ThyX family. As to quaternary structure, homotetramer. FAD serves as cofactor.

The catalysed reaction is dUMP + (6R)-5,10-methylene-5,6,7,8-tetrahydrofolate + NADPH + H(+) = dTMP + (6S)-5,6,7,8-tetrahydrofolate + NADP(+). It functions in the pathway pyrimidine metabolism; dTTP biosynthesis. Its function is as follows. Catalyzes the reductive methylation of 2'-deoxyuridine-5'-monophosphate (dUMP) to 2'-deoxythymidine-5'-monophosphate (dTMP) while utilizing 5,10-methylenetetrahydrofolate (mTHF) as the methyl donor, and NADPH and FADH(2) as the reductant. The protein is Flavin-dependent thymidylate synthase of Aeropyrum pernix (strain ATCC 700893 / DSM 11879 / JCM 9820 / NBRC 100138 / K1).